The following is a 310-amino-acid chain: E3 ubiquitin-protein ligase CSU1 (310 aa).

The RING-type 1; degenerate zinc finger occupies 43 to 67 (CSLCLKPFIDPMCCHKGHVFCRECI). A coiled-coil region spans residues 75-95 (KKDIQRRLAAHSSQKKQDKDE). Positions 110–138 (EFDQQNHSAMPRNSDKNHNEDKNGFHGAN) are disordered. The segment covering 122–133 (NSDKNHNEDKNG) has biased composition (basic and acidic residues). Residues 221-263 (CPSCKVTLTNTMSLVALSSCGHVFCKKCAEKFMPVDKVCLVCD) form an RING-type 2 zinc finger.

This sequence belongs to the NOSIP family.

It localises to the nucleus. The protein resides in the nucleus speckle. The catalysed reaction is S-ubiquitinyl-[E2 ubiquitin-conjugating enzyme]-L-cysteine + [acceptor protein]-L-lysine = [E2 ubiquitin-conjugating enzyme]-L-cysteine + N(6)-ubiquitinyl-[acceptor protein]-L-lysine.. It participates in protein modification; protein ubiquitination. In terms of biological role, RING-finger E3 ubiquitin-protein ligase that plays an major role in maintaining COP1 homeostasis in darkness. Negatively regulates COP1 protein accumulation by targeting COP1 for ubiquitination and subsequent proteasomal degradation in dark-grown seedlings. Negatively regulates the accumulation of SPA1 protein in the dark. The chain is E3 ubiquitin-protein ligase CSU1 from Arabidopsis thaliana (Mouse-ear cress).